Consider the following 245-residue polypeptide: DNA polymerase sliding clamp 1 (245 aa).

This sequence belongs to the PCNA family. The subunits circularize to form a toroid; DNA passes through its center. Replication factor C (RFC) is required to load the toroid on the DNA. Forms a dimeric complex with PCNA3 and a trimeric complex with PCNA2 and PCNA3; does not form homotrimers.

Functionally, sliding clamp subunit that acts as a moving platform for DNA processing. Responsible for tethering the catalytic subunit of DNA polymerase and other proteins to DNA during high-speed replication. The trimeric complex inhibits DNA ligase and both 3'-5' and 5'-3' activity of Hel308 (Hjm) helicase, but stimulates Hjc, the Holliday junction cleavage enzyme. In Sulfurisphaera tokodaii (strain DSM 16993 / JCM 10545 / NBRC 100140 / 7) (Sulfolobus tokodaii), this protein is DNA polymerase sliding clamp 1.